The primary structure comprises 99 residues: Malonate decarboxylase acyl carrier protein (99 aa).

O-(phosphoribosyl dephospho-coenzyme A)serine is present on serine 25.

It belongs to the MdcC family. Covalently binds the prosthetic group of malonate decarboxylase.

It localises to the cytoplasm. Its function is as follows. Subunit of malonate decarboxylase, it is an acyl carrier protein to which acetyl and malonyl thioester residues are bound via a 2'-(5''-phosphoribosyl)-3'-dephospho-CoA prosthetic group and turn over during the catalytic mechanism. The chain is Malonate decarboxylase acyl carrier protein from Pseudomonas fluorescens (strain SBW25).